The sequence spans 382 residues: Galactokinase (382 aa).

34-37 (EHTD) serves as a coordination point for substrate. 124 to 130 (GAGLSSS) provides a ligand contact to ATP. Ser-130 and Glu-162 together coordinate Mg(2+). Asp-174 acts as the Proton acceptor in catalysis. Residue Tyr-223 participates in substrate binding.

This sequence belongs to the GHMP kinase family. GalK subfamily.

The protein resides in the cytoplasm. The enzyme catalyses alpha-D-galactose + ATP = alpha-D-galactose 1-phosphate + ADP + H(+). It participates in carbohydrate metabolism; galactose metabolism. Its function is as follows. Catalyzes the transfer of the gamma-phosphate of ATP to D-galactose to form alpha-D-galactose-1-phosphate (Gal-1-P). This is Galactokinase from Shigella boydii serotype 18 (strain CDC 3083-94 / BS512).